The primary structure comprises 620 residues: Membralin (620 aa).

Positions 1–33 (MSEHVEPAAPGPGPNGGGGGPAPARGPRTPNLN) are disordered. The residue at position 2 (S2) is an N-acetylserine. The segment covering 22-31 (APARGPRTPN) has biased composition (low complexity). T29 carries the post-translational modification Phosphothreonine. A helical membrane pass occupies residues 70 to 90 (FFVLLKALFVLFVLAYIHIVF). N189 is a glycosylation site (N-linked (GlcNAc...) asparagine). 3 helical membrane passes run 302–322 (TSYL…SMLL), 346–366 (IAFP…MEAI), and 426–446 (YSSL…IYFF). 2 disordered regions span residues 474–517 (TPTA…GPVA) and 568–620 (SPLG…EVGS). 2 stretches are compositionally biased toward low complexity: residues 499-517 (PPAL…GPVA) and 568-593 (SPLG…AASD).

This sequence belongs to the membralin family. Interacts with ERLIN2.

The protein resides in the endoplasmic reticulum membrane. May have a role in the ERAD pathway required for clearance of misfolded proteins in the endoplasmic reticulum (ER). Promotes survival of motor neurons, probably by protecting against ER stress. This is Membralin (TMEM259) from Homo sapiens (Human).